A 262-amino-acid polypeptide reads, in one-letter code: Ribosome-recycling factor, mitochondrial (262 aa).

A mitochondrion-targeting transit peptide spans 1–55; that stretch reads MALGIRCFRLLHPAFSSYLADLSRPVSEVPMKTVRGRQRDHIQYSAHPAVPVRQF.

It belongs to the RRF family.

Its subcellular location is the mitochondrion. Its function is as follows. Responsible for the disassembly of ribosomes from messenger RNA at the termination of mitochondrial protein biosynthesis. Acts in collaboration with GFM2. Promotes mitochondrial ribosome recycling by dissolution of intersubunit contacts. The protein is Ribosome-recycling factor, mitochondrial (Mrrf) of Rattus norvegicus (Rat).